A 437-amino-acid chain; its full sequence is uncharacterized protein (437 aa).

This is an uncharacterized protein from Rhodococcus erythropolis (Arthrobacter picolinophilus).